A 736-amino-acid chain; its full sequence is Phosphoribosylformylglycinamidine synthase subunit PurL (736 aa).

H50 is an active-site residue. Y53 and K92 together coordinate ATP. Mg(2+) is bound at residue E94. Substrate contacts are provided by residues 95–98 and R117; that span reads SHNH. The active-site Proton acceptor is H96. Mg(2+) is bound at residue D118. Q241 is a binding site for substrate. D269 is a binding site for Mg(2+). 313–315 lines the substrate pocket; sequence ESQ. ATP is bound by residues D495 and G532. A Mg(2+)-binding site is contributed by N533. S535 lines the substrate pocket.

It belongs to the FGAMS family. In terms of assembly, monomer. Part of the FGAM synthase complex composed of 1 PurL, 1 PurQ and 2 PurS subunits.

It localises to the cytoplasm. The enzyme catalyses N(2)-formyl-N(1)-(5-phospho-beta-D-ribosyl)glycinamide + L-glutamine + ATP + H2O = 2-formamido-N(1)-(5-O-phospho-beta-D-ribosyl)acetamidine + L-glutamate + ADP + phosphate + H(+). Its pathway is purine metabolism; IMP biosynthesis via de novo pathway; 5-amino-1-(5-phospho-D-ribosyl)imidazole from N(2)-formyl-N(1)-(5-phospho-D-ribosyl)glycinamide: step 1/2. Its function is as follows. Part of the phosphoribosylformylglycinamidine synthase complex involved in the purines biosynthetic pathway. Catalyzes the ATP-dependent conversion of formylglycinamide ribonucleotide (FGAR) and glutamine to yield formylglycinamidine ribonucleotide (FGAM) and glutamate. The FGAM synthase complex is composed of three subunits. PurQ produces an ammonia molecule by converting glutamine to glutamate. PurL transfers the ammonia molecule to FGAR to form FGAM in an ATP-dependent manner. PurS interacts with PurQ and PurL and is thought to assist in the transfer of the ammonia molecule from PurQ to PurL. The polypeptide is Phosphoribosylformylglycinamidine synthase subunit PurL (Bartonella quintana (strain Toulouse) (Rochalimaea quintana)).